We begin with the raw amino-acid sequence, 139 residues long: Acidic phospholipase A2 S1E6-c (139 aa).

An N-terminal signal peptide occupies residues 1–16; the sequence is MRTLWILAVLLVGVEG. Cystine bridges form between cysteine 42–cysteine 132, cysteine 44–cysteine 60, cysteine 59–cysteine 111, cysteine 65–cysteine 139, cysteine 66–cysteine 104, cysteine 73–cysteine 97, and cysteine 91–cysteine 102. Ca(2+) is bound by residues tyrosine 43, glycine 45, and glycine 47. Residue histidine 63 is part of the active site. Position 64 (aspartate 64) interacts with Ca(2+). Aspartate 105 is a catalytic residue.

It belongs to the phospholipase A2 family. Group II subfamily. D49 sub-subfamily. As to quaternary structure, homodimer. Requires Ca(2+) as cofactor. Expressed by the venom gland.

It is found in the secreted. It catalyses the reaction a 1,2-diacyl-sn-glycero-3-phosphocholine + H2O = a 1-acyl-sn-glycero-3-phosphocholine + a fatty acid + H(+). Its function is as follows. Snake venom phospholipase A2 (PLA2) that inhibits ADP-induced platelet aggregation. PLA2 catalyzes the calcium-dependent hydrolysis of the 2-acyl groups in 3-sn-phosphoglycerides. This chain is Acidic phospholipase A2 S1E6-c, found in Calloselasma rhodostoma (Malayan pit viper).